We begin with the raw amino-acid sequence, 120 residues long: Large ribosomal subunit protein bL20 (120 aa).

It belongs to the bacterial ribosomal protein bL20 family.

Binds directly to 23S ribosomal RNA and is necessary for the in vitro assembly process of the 50S ribosomal subunit. It is not involved in the protein synthesizing functions of that subunit. This chain is Large ribosomal subunit protein bL20, found in Cereibacter sphaeroides (strain ATCC 17025 / ATH 2.4.3) (Rhodobacter sphaeroides).